A 135-amino-acid chain; its full sequence is uncharacterized protein (135 aa).

A disordered region spans residues M1–A80. Positions G54–G65 are enriched in gly residues.

This is an uncharacterized protein from Homo sapiens (Human).